The following is a 250-amino-acid chain: Vacuolar iron transporter 1 (250 aa).

Over 1-37 the chain is Cytoplasmic; it reads MSSEEDKITRISIEPEKQTLLDHHTEKHFTAGEIVRD. Residues 38–58 traverse the membrane as a helical segment; sequence IIIGVSDGLTVPFALAAGLSG. Topologically, residues 59 to 64 are vacuolar; it reads ANASSS. Residues 65 to 85 traverse the membrane as a helical segment; it reads IVLTAGIAEVAAGAISMGLGG. The Cytoplasmic portion of the chain corresponds to 86-169; the sequence is YLAAKSEEDH…PDPKRALQSA (84 aa). The tract at residues 91-166 is cytoplasmic metal binding domain (MBD); that stretch reads SEEDHYAREM…LEKPDPKRAL (76 aa). 6 residues coordinate Fe cation: glutamate 103, glutamate 106, glutamate 114, glutamate 117, methionine 150, and glutamate 154. Residues 170–190 form a helical membrane-spanning segment; the sequence is FTIAIAYVLGGFIPLLPYMLI. Residues 191 to 192 lie on the Vacuolar side of the membrane; it reads PH. A helical transmembrane segment spans residues 193–213; it reads AMDAVVASVVITLFALFIFGY. Residues 214–227 lie on the Cytoplasmic side of the membrane; it reads AKGHFTGSKPLRSA. The chain crosses the membrane as a helical span at residues 228–248; sequence FETAFIGAIASAAAFCLAKVV. The Vacuolar portion of the chain corresponds to 249–250; sequence QH.

The protein belongs to the CCC1 family. Homodimer. The dimeric interaction is mediated by both the transmembrane domains (TMDs) and the cytoplasmic metal binding domain (MBD). As to expression, highly expressed in developing embryo and seed. Expressed in young seedlings, predominantly in the vasculature.

The protein localises to the vacuole membrane. The enzyme catalyses Fe(2+)(in) = Fe(2+)(out). Vacuolar iron transporter involved in the transfer of iron ions from the cytosol to the vacuole for intracellular iron storage. Involved in regulation of cellular iron homeostasis. Vacuolar iron storage is required for seed embryo and seedling development. The sequence is that of Vacuolar iron transporter 1 from Arabidopsis thaliana (Mouse-ear cress).